A 102-amino-acid polypeptide reads, in one-letter code: MDQQTAHEVRQTLIHADERYQAYTMDLEYMLRWEILRDGEFVQEGCSLSQESAREAVAHVLSHFRRQMLRRRTTAGKAKLRALLAIGTPSPEGRERRGERDI.

As to quaternary structure, the soluble methane monooxygenase (sMMO) consists of four components A/MMOH (composed of alpha/MmoX, beta/MmoY and gamma/MmoZ), B/MMOB (MmoB), C/MMOR (MmoC) and D/MMOD (MmoD).

This is Methane monooxygenase component D (mmoD) from Methylosinus trichosporium.